Here is a 243-residue protein sequence, read N- to C-terminus: Putative outer membrane protein RP075 (243 aa).

An N-terminal signal peptide occupies residues 1-23 (MLRIVKKLWVILFISNISINSFA).

Belongs to the OmpW/AlkL family.

It is found in the cell outer membrane. This is Putative outer membrane protein RP075 from Rickettsia prowazekii (strain Madrid E).